The chain runs to 448 residues: MFIEQMFPFINESVRVHQLPEGGVLEIDYLRDNVSISDFEYLDLNKTAYELCMRMDGQKTAEQILAEQCAVYDESPEDHKDWYYDMLNMLQNKQVIQLGNRASRHTITTSGSNEFPMPLHATFELTHRCNLKCAHCYLESSPEALGTVSIEQFKKTADMLFDNGVLTCEITGGEIFVHPNANEILDYVCKKFKKVAVLTNGTLMRKESLELLKTYKQKIIVGISLDSVNSEVHDSFRGRKGSFAQTCKTIKLLSDHGIFVRVAMSVFEKNMWEIHDMAQKVRDLGAKAFSYNWVDDFGRGRDIVHPTKDAEQHRKFMEYEQHVIDEFKDLIPIIPYERKRAANCGAGWKSIVISPFGEVRPCALFPKEFSLGNIFHDSYESIFNSPLVHKLWQAQAPRFSEHCMKDKCPFSGYCGGCYLKGLNSNKYHRKNICSWAKNEQLEDVVQLI.

One can recognise a Radical SAM core domain in the interval F115–D329. [4Fe-4S] cluster contacts are provided by C129, C133, C136, C408, C414, and C417.

[4Fe-4S] cluster serves as cofactor.

It localises to the cytoplasm. Its function is as follows. Catalyzes the formation of 3 thioether bonds during production of the sactipeptide subtilosin from SboA. In vitro the thioether bonds cannot be made in the absence of the SboA propeptide, suggesting this is the first reaction in subtilosin maturation. In vitro, in the absence of a second substrate, cleaves S-adenosyl-L-methionine into Met and 5'-dA. This Bacillus subtilis (strain 168) protein is Antilisterial bacteriocin subtilosin biosynthesis protein AlbA (albA).